The chain runs to 338 residues: Glycerol-3-phosphate dehydrogenase [NAD(P)+] (338 aa).

Serine 14, tyrosine 15, histidine 35, and lysine 109 together coordinate NADPH. Sn-glycerol 3-phosphate contacts are provided by lysine 109, glycine 138, and threonine 140. NADPH is bound at residue alanine 142. 5 residues coordinate sn-glycerol 3-phosphate: lysine 194, aspartate 247, serine 257, arginine 258, and asparagine 259. The active-site Proton acceptor is lysine 194. Arginine 258 lines the NADPH pocket. NADPH-binding residues include valine 282 and glutamate 284.

The protein belongs to the NAD-dependent glycerol-3-phosphate dehydrogenase family.

The protein localises to the cytoplasm. The catalysed reaction is sn-glycerol 3-phosphate + NAD(+) = dihydroxyacetone phosphate + NADH + H(+). The enzyme catalyses sn-glycerol 3-phosphate + NADP(+) = dihydroxyacetone phosphate + NADPH + H(+). Its pathway is membrane lipid metabolism; glycerophospholipid metabolism. In terms of biological role, catalyzes the reduction of the glycolytic intermediate dihydroxyacetone phosphate (DHAP) to sn-glycerol 3-phosphate (G3P), the key precursor for phospholipid synthesis. This chain is Glycerol-3-phosphate dehydrogenase [NAD(P)+], found in Shewanella baltica (strain OS185).